The sequence spans 118 residues: MKNRYIQQFEDAQLKDKSMPTFKAGDTLRLGITIKEGEKTRTQYFEGVCIAIRGNGVDKTFCVRKIGANNIGVEKIFPFYSESLASVEVLRVGRVRRAKLYYLRDRRGKAARIKEVRH.

The protein belongs to the bacterial ribosomal protein bL19 family.

Its function is as follows. This protein is located at the 30S-50S ribosomal subunit interface and may play a role in the structure and function of the aminoacyl-tRNA binding site. This chain is Large ribosomal subunit protein bL19 (rplS), found in Helicobacter pylori (strain J99 / ATCC 700824) (Campylobacter pylori J99).